The following is an 82-amino-acid chain: Small ribosomal subunit protein eS27A (82 aa).

The C4-type zinc finger occupies C37–C59. The residue at position 40 (C40) is an S-methylcysteine.

The protein belongs to the eukaryotic ribosomal protein eS27 family. Component of the small ribosomal subunit (SSU). Mature yeast ribosomes consist of a small (40S) and a large (60S) subunit. The 40S small subunit contains 1 molecule of ribosomal RNA (18S rRNA) and 33 different proteins (encoded by 57 genes). The large 60S subunit contains 3 rRNA molecules (25S, 5.8S and 5S rRNA) and 46 different proteins (encoded by 81 genes). It depends on Zn(2+) as a cofactor. In terms of processing, the N-terminus is not modified.

The protein localises to the cytoplasm. Its function is as follows. Component of the ribosome, a large ribonucleoprotein complex responsible for the synthesis of proteins in the cell. The small ribosomal subunit (SSU) binds messenger RNAs (mRNAs) and translates the encoded message by selecting cognate aminoacyl-transfer RNA (tRNA) molecules. The large subunit (LSU) contains the ribosomal catalytic site termed the peptidyl transferase center (PTC), which catalyzes the formation of peptide bonds, thereby polymerizing the amino acids delivered by tRNAs into a polypeptide chain. The nascent polypeptides leave the ribosome through a tunnel in the LSU and interact with protein factors that function in enzymatic processing, targeting, and the membrane insertion of nascent chains at the exit of the ribosomal tunnel. This chain is Small ribosomal subunit protein eS27A, found in Saccharomyces cerevisiae (strain ATCC 204508 / S288c) (Baker's yeast).